A 153-amino-acid chain; its full sequence is UPF0756 membrane protein Lm4b_01579 (153 aa).

Transmembrane regions (helical) follow at residues Met6–Ile26, Trp54–Phe74, Ser80–Ala100, and Leu117–Ile137.

Belongs to the UPF0756 family.

Its subcellular location is the cell membrane. The sequence is that of UPF0756 membrane protein Lm4b_01579 from Listeria monocytogenes serotype 4b (strain CLIP80459).